The following is a 433-amino-acid chain: Ligand-dependent corepressor (433 aa).

Positions 1 to 51 (MQRMIQQFAAEYTSKNSSTQDPSQPNSTKNQSLPKASPVTTSPTAATTQNP) are disordered. Polar residues predominate over residues 13–34 (TSKNSSTQDPSQPNSTKNQSLP). Residues 36 to 48 (ASPVTTSPTAATT) show a composition bias toward low complexity. At serine 42 the chain carries Phosphoserine. Positions 53–57 (LSKLL) match the Interaction with nuclear receptors motif. Serine 63 is subject to Phosphoserine. A disordered region spans residues 64 to 147 (PLDLTVRKSQ…GTREGFGHST (84 aa)). Positions 93 to 110 (AGSTSLSHSPGCSSTQGN) are enriched in polar residues. The residue at position 249 (serine 249) is a Phosphoserine. Residue lysine 254 forms a Glycyl lysine isopeptide (Lys-Gly) (interchain with G-Cter in SUMO2) linkage. The segment at 299–348 (QSRKSMLDAGPDSWGSDAEQSTSGQPYPTSDQEGDPGSKQPRKKRGRYRQ) is disordered. The segment covering 316-329 (AEQSTSGQPYPTSD) has biased composition (polar residues). A Nuclear localization signal motif is present at residues 339-345 (PRKKRGR). Residues 340 to 392 (RKKRGRYRQYNSEILEEAISVVMSGKMSVSKAQSIYGIPHSTLEYKVKERLGT) form the HTH psq-type domain. A Glycyl lysine isopeptide (Lys-Gly) (interchain with G-Cter in SUMO2) cross-link involves residue arginine 345. A DNA-binding region (H-T-H motif) is located at residues 368–388 (VSKAQSIYGIPHSTLEYKVKE). Residue glycine 391 forms a Glycyl lysine isopeptide (Lys-Gly) (interchain with G-Cter in SUMO2) linkage. Positions 393–412 (LKNPPKKKMKLMRSEGPDVS) are disordered. Lysine 414 is covalently cross-linked (Glycyl lysine isopeptide (Lys-Gly) (interchain with G-Cter in SUMO2)).

In terms of assembly, interacts with ESR1 and ESR2 in the presence of estradiol. Interacts with CTBP1, HDAC3 and HDAC6. Component of a large corepressor complex that contains about 20 proteins, including CTBP1, CTBP2, HDAC1 and HDAC2. As to expression, ubiquitous.

It localises to the nucleus. May act as transcription activator that binds DNA elements with the sequence 5'-CCCTATCGATCGATCTCTACCT-3'. Repressor of ligand-dependent transcription activation by target nuclear receptors. Repressor of ligand-dependent transcription activation by ESR1, ESR2, NR3C1, PGR, RARA, RARB, RARG, RXRA and VDR. This Homo sapiens (Human) protein is Ligand-dependent corepressor.